We begin with the raw amino-acid sequence, 365 residues long: MNAQAMDPQQYEQQLEQKCQALTEAFAHYNPPALEVFPSAPAHYRMRCEFRVWHDGDDLYYCMFDNVAKEKVRTDQFLPASELINRMMPALLDELRPNRALRHKLFQVDFLSTLSGEILVSLLYHRQLDDQWLTEARALKARLGEHFKVDIIGRARKQKFVLDRDFVVESLDVDGKTLHYKQVENSFTQPNAGVAVKMLEWALDATKQSSGDLLELYCGNGNFSIALAPNFGKVLATELAKPSVEAAQYNIQVNKVSNLDIVRMSAEEFTEAMKGEKRFNRLGDIDLQSYQCNTIFVDPPRAGLDDETVKLVQGYENILYISCNPDTLNDNLKVLSETHEVVRFALFDQFPYTHHTEAGVMLKRR.

Residues glutamine 189, tyrosine 217, asparagine 222, glutamate 238, and aspartate 298 each contribute to the S-adenosyl-L-methionine site. The active-site Nucleophile is cysteine 323. The active-site Proton acceptor is glutamate 357.

It belongs to the class I-like SAM-binding methyltransferase superfamily. RNA M5U methyltransferase family. TrmA subfamily.

It carries out the reaction uridine(54) in tRNA + S-adenosyl-L-methionine = 5-methyluridine(54) in tRNA + S-adenosyl-L-homocysteine + H(+). The catalysed reaction is uridine(341) in tmRNA + S-adenosyl-L-methionine = 5-methyluridine(341) in tmRNA + S-adenosyl-L-homocysteine + H(+). In terms of biological role, dual-specificity methyltransferase that catalyzes the formation of 5-methyluridine at position 54 (m5U54) in all tRNAs, and that of position 341 (m5U341) in tmRNA (transfer-mRNA). The chain is tRNA/tmRNA (uracil-C(5))-methyltransferase from Shewanella amazonensis (strain ATCC BAA-1098 / SB2B).